Here is a 74-residue protein sequence, read N- to C-terminus: Delta-actitoxin-Amc3a (74 aa).

The first 19 residues, 1–19 (MNRLIILVVAAVFLGMASA), serve as a signal peptide directing secretion. Positions 20–24 (EEDVL) are excised as a propeptide. At Pro29 the chain carries Hydroxyproline. 3 disulfide bridges follow: Cys30-Cys70, Cys32-Cys60, and Cys53-Cys71. At Gln73 the chain carries Glutamine amide.

The protein belongs to the sea anemone sodium channel inhibitory toxin family. Type I subfamily.

It is found in the secreted. Its subcellular location is the nematocyst. Its function is as follows. Inhibits voltage-gated sodium channels (Nav). In Antheopsis maculata (Sea anemone), this protein is Delta-actitoxin-Amc3a.